We begin with the raw amino-acid sequence, 139 residues long: Centromere protein S (139 aa).

Residues 99-139 (ELASSNMEQKEKKKKKSSAAKGRKTEENETPVTESEDSNMA) are disordered. Positions 110–120 (KKKKKSSAAKG) are enriched in basic residues.

Belongs to the TAF9 family. CENP-S/MHF1 subfamily. In terms of assembly, heterodimer with CENPX, sometimes called MHF; this interaction stabilizes both partners. MHF heterodimers can assemble to form tetrameric structures. MHF also coassemble with CENPT-CENPW heterodimers at centromeres to form the tetrameric CENP-T-W-S-X complex. Forms a discrete complex with FANCM and CENPX, called FANCM-MHF; this interaction, probably mediated by direct binding between CENPS and FANCM, leads to synergistic activation of double-stranded DNA binding and strongly stimulates FANCM-mediated DNA remodeling. Recruited by FANCM to the Fanconi anemia (FA) core complex, which consists of CENPS, CENPX, FANCA, FANCB, FANCC, FANCE, FANCF, FANCG, FANCL, FANCM, FAAP24 and FAAP100. The FA core complex associates with Bloom syndrome (BLM) complex, which consists of at least BLM, DNA topoisomerase 3-alpha (TOP3A), RMI1/BLAP75, RPA1/RPA70 and RPA2/RPA32. The super complex between FA and BLM is called BRAFT. Component of the CENPA-CAD complex, composed of CENPI, CENPK, CENPL, CENPO, CENPP, CENPQ, CENPR and CENPS. The CENPA-CAD complex is probably recruited on centromeres by the CENPA-NAC complex, at least composed of CENPA, CENPC, CENPH, CENPM, CENPN, CENPT and CENPU.

The protein resides in the nucleus. Its subcellular location is the chromosome. It is found in the centromere. The protein localises to the kinetochore. Functionally, DNA-binding component of the Fanconi anemia (FA) core complex. Required for the normal activation of the FA pathway, leading to monoubiquitination of the FANCI-FANCD2 complex in response to DNA damage, cellular resistance to DNA cross-linking drugs, and prevention of chromosomal breakage. In complex with CENPX (MHF heterodimer), crucial cofactor for FANCM in both binding and ATP-dependent remodeling of DNA. Stabilizes FANCM. In complex with CENPX and FANCM (but not other FANC proteins), rapidly recruited to blocked forks and promotes gene conversion at blocked replication forks. In complex with CENPT, CENPW and CENPX (CENP-T-W-S-X heterotetramer), involved in the formation of a functional kinetochore outer plate, which is essential for kinetochore-microtubule attachment and faithful mitotic progression. As a component of MHF and CENP-T-W-S-X complexes, binds DNA and bends it to form a nucleosome-like structure. DNA-binding function is fulfilled in the presence of CENPX, with the following preference for DNA substates: Holliday junction &gt; double-stranded &gt; splay arm &gt; single-stranded. Does not bind DNA on its own. The chain is Centromere protein S (CENPS) from Gallus gallus (Chicken).